The following is a 368-amino-acid chain: Phosphoribosylformylglycinamidine cyclo-ligase (368 aa).

The protein belongs to the AIR synthase family.

It is found in the cytoplasm. The catalysed reaction is 2-formamido-N(1)-(5-O-phospho-beta-D-ribosyl)acetamidine + ATP = 5-amino-1-(5-phospho-beta-D-ribosyl)imidazole + ADP + phosphate + H(+). The protein operates within purine metabolism; IMP biosynthesis via de novo pathway; 5-amino-1-(5-phospho-D-ribosyl)imidazole from N(2)-formyl-N(1)-(5-phospho-D-ribosyl)glycinamide: step 2/2. This is Phosphoribosylformylglycinamidine cyclo-ligase from Chelativorans sp. (strain BNC1).